A 226-amino-acid chain; its full sequence is MNNKYQIAIDGPASAGKSTVAKIVAKDLQYVYCDTGAMYRVVTLKAIQNGIDLNDETKISEMLNDTDIRFEPGEPVQKVFLDGNEVTEDIRQANVTNSVSTIAAQKAVREVLTNWQRDLAKNGGIVMDGRDIGSAVLPNAEVKIFLIASVQERAERRYKENIAKGMETDLEQLKKEIEIRDHKDSTRKISPLTKASDAIEVDTTSMSIQDVVNEILRIVENASKRK.

Residue 11-19 participates in ATP binding; that stretch reads GPASAGKST.

Belongs to the cytidylate kinase family. Type 1 subfamily.

The protein localises to the cytoplasm. It carries out the reaction CMP + ATP = CDP + ADP. The enzyme catalyses dCMP + ATP = dCDP + ADP. The polypeptide is Cytidylate kinase (Pediococcus pentosaceus (strain ATCC 25745 / CCUG 21536 / LMG 10740 / 183-1w)).